The sequence spans 224 residues: Glutathione S-transferase D7 (224 aa).

One can recognise a GST N-terminal domain in the interval Pro2–Asp83. Glutathione is bound by residues His53–Ile55 and Glu67–Arg69. Positions Asp90–Phe210 constitute a GST C-terminal domain.

This sequence belongs to the GST superfamily. Delta family. As to quaternary structure, homodimer.

The enzyme catalyses RX + glutathione = an S-substituted glutathione + a halide anion + H(+). In terms of biological role, conjugation of reduced glutathione to a wide number of exogenous and endogenous hydrophobic electrophiles. May be involved in detoxification. This chain is Glutathione S-transferase D7, found in Drosophila melanogaster (Fruit fly).